We begin with the raw amino-acid sequence, 156 residues long: Ribosomal RNA large subunit methyltransferase H (156 aa).

Residues Leu-72, Gly-104, and 123-128 (FGKMVW) contribute to the S-adenosyl-L-methionine site.

This sequence belongs to the RNA methyltransferase RlmH family. In terms of assembly, homodimer.

The protein localises to the cytoplasm. The catalysed reaction is pseudouridine(1915) in 23S rRNA + S-adenosyl-L-methionine = N(3)-methylpseudouridine(1915) in 23S rRNA + S-adenosyl-L-homocysteine + H(+). Its function is as follows. Specifically methylates the pseudouridine at position 1915 (m3Psi1915) in 23S rRNA. The chain is Ribosomal RNA large subunit methyltransferase H from Ruegeria sp. (strain TM1040) (Silicibacter sp.).